We begin with the raw amino-acid sequence, 426 residues long: MPDAYVESLGKMIAILVNYKPGSITLENITRLCQTMGLESFVDQVSANISRLSIASKIIVIDIDYEVTDGKVIDVKLVLASNFDKFDYFNGEANILHRSLTTYSDLHEFHHNLKFLTLLDACSSIDIESNVSQFDLFEYYSMLPQYMQSYLDDNGAQLTVQTNLNDRFGIYLLDHSEKKVAKLTFAATQDPNQRYYEYKYSSETKEWINQSAESYTTGITLVFELLGDPPTYLPKDSLPPEHPDEGFTSASASELQRRFAFKCQNPRVTLVNDFTVDVYPASTFQLLNDNICLCFDILRRQKWWHTVLYPISQLLLHQGQDSAVGDAPAPAAQPPLHRRRSSNKGCRRASAAESATLGDENMHQLTLTEIMNKSVIPEDDAMMDDRIELYVNENYVYLGTQEGCSFYNDPIERWEAFVESLRQMLT.

The disordered stretch occupies residues 324 to 356 (VGDAPAPAAQPPLHRRRSSNKGCRRASAAESAT). Residues 336–347 (LHRRRSSNKGCR) show a composition bias toward basic residues.

It belongs to the Mediator complex subunit 1 family. In terms of assembly, component of the Mediator complex.

It is found in the nucleus. In terms of biological role, component of the Mediator complex, a coactivator involved in the regulated transcription of nearly all RNA polymerase II-dependent genes. Mediator functions as a bridge to convey information from gene-specific regulatory proteins to the basal RNA polymerase II transcription machinery. Mediator is recruited to promoters by direct interactions with regulatory proteins and serves as a scaffold for the assembly of a functional preinitiation complex with RNA polymerase II and the general transcription factors. The chain is Mediator of RNA polymerase II transcription subunit 1 (MED1) from Eremothecium gossypii (strain ATCC 10895 / CBS 109.51 / FGSC 9923 / NRRL Y-1056) (Yeast).